The sequence spans 149 residues: MSGNRIQPRSVARLAAVQALYQMEVSGAGVDSVIREFGEHRFDRDVEGEQLAAADETFFADLARGVVTNQAKIDQGIVKRLASGWRLERLDATARAVLRAGAFELMYRSDVPTEVVINEYVEIAKSFFEGPESGFINGALDAIARDARD.

It belongs to the NusB family.

Its function is as follows. Involved in transcription antitermination. Required for transcription of ribosomal RNA (rRNA) genes. Binds specifically to the boxA antiterminator sequence of the ribosomal RNA (rrn) operons. This is Transcription antitermination protein NusB from Caulobacter vibrioides (strain ATCC 19089 / CIP 103742 / CB 15) (Caulobacter crescentus).